The primary structure comprises 318 residues: Thymidylate synthase (318 aa).

DUMP is bound by residues Arg-25 and 180 to 181; that span reads RR. Cys-200 serves as the catalytic Nucleophile. DUMP-binding positions include 220 to 223, Asn-231, and 261 to 263; these read RSGD and HIY. Asp-223 serves as a coordination point for (6R)-5,10-methylene-5,6,7,8-tetrahydrofolate. Ala-317 is a binding site for (6R)-5,10-methylene-5,6,7,8-tetrahydrofolate.

The protein belongs to the thymidylate synthase family. Bacterial-type ThyA subfamily. In terms of assembly, homodimer.

The protein resides in the cytoplasm. It carries out the reaction dUMP + (6R)-5,10-methylene-5,6,7,8-tetrahydrofolate = 7,8-dihydrofolate + dTMP. It functions in the pathway pyrimidine metabolism; dTTP biosynthesis. In terms of biological role, catalyzes the reductive methylation of 2'-deoxyuridine-5'-monophosphate (dUMP) to 2'-deoxythymidine-5'-monophosphate (dTMP) while utilizing 5,10-methylenetetrahydrofolate (mTHF) as the methyl donor and reductant in the reaction, yielding dihydrofolate (DHF) as a by-product. This enzymatic reaction provides an intracellular de novo source of dTMP, an essential precursor for DNA biosynthesis. This is Thymidylate synthase from Bacillus cytotoxicus (strain DSM 22905 / CIP 110041 / 391-98 / NVH 391-98).